The chain runs to 452 residues: UDP-N-acetylmuramoylalanine--D-glutamate ligase (452 aa).

Position 119 to 125 (119 to 125 (GSNGKTT)) interacts with ATP.

Belongs to the MurCDEF family.

The protein localises to the cytoplasm. The catalysed reaction is UDP-N-acetyl-alpha-D-muramoyl-L-alanine + D-glutamate + ATP = UDP-N-acetyl-alpha-D-muramoyl-L-alanyl-D-glutamate + ADP + phosphate + H(+). The protein operates within cell wall biogenesis; peptidoglycan biosynthesis. Cell wall formation. Catalyzes the addition of glutamate to the nucleotide precursor UDP-N-acetylmuramoyl-L-alanine (UMA). This is UDP-N-acetylmuramoylalanine--D-glutamate ligase from Streptococcus pyogenes serotype M4 (strain MGAS10750).